We begin with the raw amino-acid sequence, 399 residues long: uncharacterized protein (399 aa).

Transmembrane regions (helical) follow at residues Ile-46–Val-66, Thr-76–Met-95, Gly-139–Ala-159, Ile-181–Phe-201, Leu-226–Phe-246, Ile-262–Trp-282, Val-303–Met-323, Ile-330–Phe-350, and Gly-352–His-372.

This sequence belongs to the CDP-alcohol phosphatidyltransferase class-I family.

Its subcellular location is the membrane. This is an uncharacterized protein from Dictyostelium discoideum (Social amoeba).